Here is a 210-residue protein sequence, read N- to C-terminus: UPF0301 protein Mnod_6933 (210 aa).

Belongs to the UPF0301 (AlgH) family.

The protein is UPF0301 protein Mnod_6933 of Methylobacterium nodulans (strain LMG 21967 / CNCM I-2342 / ORS 2060).